A 150-amino-acid polypeptide reads, in one-letter code: SsrA-binding protein (150 aa).

Positions Asp-130–Arg-150 are disordered.

This sequence belongs to the SmpB family.

The protein resides in the cytoplasm. Functionally, required for rescue of stalled ribosomes mediated by trans-translation. Binds to transfer-messenger RNA (tmRNA), required for stable association of tmRNA with ribosomes. tmRNA and SmpB together mimic tRNA shape, replacing the anticodon stem-loop with SmpB. tmRNA is encoded by the ssrA gene; the 2 termini fold to resemble tRNA(Ala) and it encodes a 'tag peptide', a short internal open reading frame. During trans-translation Ala-aminoacylated tmRNA acts like a tRNA, entering the A-site of stalled ribosomes, displacing the stalled mRNA. The ribosome then switches to translate the ORF on the tmRNA; the nascent peptide is terminated with the 'tag peptide' encoded by the tmRNA and targeted for degradation. The ribosome is freed to recommence translation, which seems to be the essential function of trans-translation. This is SsrA-binding protein from Phocaeicola vulgatus (strain ATCC 8482 / DSM 1447 / JCM 5826 / CCUG 4940 / NBRC 14291 / NCTC 11154) (Bacteroides vulgatus).